Reading from the N-terminus, the 404-residue chain is Retrotransposable element SLACS 45 kDa protein (404 aa).

2 stretches are compositionally biased toward polar residues: residues Met-1 to Gln-11 and Pro-29 to Val-41. 5 disordered regions span residues Met-1–Ile-62, Lys-86–Pro-111, Leu-134–Ala-251, Cys-317–Ser-341, and Pro-369–Pro-404. A compositionally biased stretch (basic and acidic residues) spans Val-98 to Pro-111. The span at Thr-141–Val-151 shows a compositional bias: polar residues. A C2H2-type zinc finger spans residues Cys-300–His-321. Residues His-395 to Pro-404 are compositionally biased toward basic and acidic residues.

In Trypanosoma brucei gambiense, this protein is Retrotransposable element SLACS 45 kDa protein.